The chain runs to 723 residues: ESX-1 secretion-associated protein EspK (723 aa).

2 disordered regions span residues 175 to 360 (DLLQ…TPAA) and 393 to 451 (SGAG…GTPV). Low complexity predominate over residues 200 to 209 (TPGTPITPGT). A compositionally biased stretch (pro residues) spans 210-229 (PITPIPGAPVTPITPTPGTP). Positions 230-249 (VTPVTPGKPVTPVTPVKPGT) are enriched in low complexity. 2 stretches are compositionally biased toward pro residues: residues 250 to 265 (PGEP…PVAP) and 274 to 308 (PVTP…PSGP). Composition is skewed to low complexity over residues 309–319 (ATPGTPGGEPA), 393–404 (SGAGSHAATGRA), and 412–426 (AAAP…RTAP). Basic and acidic residues predominate over residues 432–444 (STDHIDKPDRSES).

Its subcellular location is the cytoplasm. Functionally, may act as a chaperone that facilitates EspB secretion through an interaction with EccCb1. The protein is ESX-1 secretion-associated protein EspK of Mycobacterium tuberculosis (strain CDC 1551 / Oshkosh).